The following is a 129-amino-acid chain: Translation initiation factor 5A (129 aa).

The residue at position 36 (lysine 36) is a Hypusine.

This sequence belongs to the eIF-5A family.

Its subcellular location is the cytoplasm. In terms of biological role, functions by promoting the formation of the first peptide bond. The chain is Translation initiation factor 5A (eIF5A) from Methanobrevibacter smithii (strain ATCC 35061 / DSM 861 / OCM 144 / PS).